Here is a 273-residue protein sequence, read N- to C-terminus: Shikimate dehydrogenase (NADP(+)) (273 aa).

Residues 14 to 16 (SKS) and Thr61 each bind shikimate. The Proton acceptor role is filled by Lys65. Asp77 provides a ligand contact to NADP(+). Asn86 and Asp102 together coordinate shikimate. Residues 126–130 (GAGGA), 150–155 (NRTYEK), and Met213 each bind NADP(+). Residue Tyr215 coordinates shikimate. An NADP(+)-binding site is contributed by Gly237.

It belongs to the shikimate dehydrogenase family. Homodimer.

It catalyses the reaction shikimate + NADP(+) = 3-dehydroshikimate + NADPH + H(+). Its pathway is metabolic intermediate biosynthesis; chorismate biosynthesis; chorismate from D-erythrose 4-phosphate and phosphoenolpyruvate: step 4/7. Involved in the biosynthesis of the chorismate, which leads to the biosynthesis of aromatic amino acids. Catalyzes the reversible NADPH linked reduction of 3-dehydroshikimate (DHSA) to yield shikimate (SA). This is Shikimate dehydrogenase (NADP(+)) from Aliivibrio salmonicida (strain LFI1238) (Vibrio salmonicida (strain LFI1238)).